A 164-amino-acid chain; its full sequence is MSIQGQIALALMVNMAVGSVDASQEVMKNLSLNFGKALDECKKEMTLTDAINEDFYNFWKEGYEIKNRETGCAIMCLSTKLNMLDPEGNLHHGNAMEFAKKHGADETMAQQLIDIVHGCEKSTPANDDKCIWTLGVATCFKAEIHKLNWAPSMDVAVGEILAEV.

A signal peptide spans 1–22 (MSIQGQIALALMVNMAVGSVDA). Disulfide bonds link cysteine 41-cysteine 76, cysteine 72-cysteine 130, and cysteine 119-cysteine 139.

It belongs to the PBP/GOBP family. In terms of assembly, homodimer. Antenna.

This major soluble protein in olfactory sensilla of male moths serves to solubilize the extremely hydrophobic pheromone molecules such as bombykol and to transport pheromone through the aqueous lymph to receptors located on olfactory cilia. The chain is Pheromone-binding protein from Bombyx mori (Silk moth).